Reading from the N-terminus, the 565-residue chain is Proline--tRNA ligase (565 aa).

This sequence belongs to the class-II aminoacyl-tRNA synthetase family. ProS type 1 subfamily. Homodimer.

The protein localises to the cytoplasm. It carries out the reaction tRNA(Pro) + L-proline + ATP = L-prolyl-tRNA(Pro) + AMP + diphosphate. Catalyzes the attachment of proline to tRNA(Pro) in a two-step reaction: proline is first activated by ATP to form Pro-AMP and then transferred to the acceptor end of tRNA(Pro). As ProRS can inadvertently accommodate and process non-cognate amino acids such as alanine and cysteine, to avoid such errors it has two additional distinct editing activities against alanine. One activity is designated as 'pretransfer' editing and involves the tRNA(Pro)-independent hydrolysis of activated Ala-AMP. The other activity is designated 'posttransfer' editing and involves deacylation of mischarged Ala-tRNA(Pro). The misacylated Cys-tRNA(Pro) is not edited by ProRS. The polypeptide is Proline--tRNA ligase (Lactobacillus delbrueckii subsp. bulgaricus (strain ATCC 11842 / DSM 20081 / BCRC 10696 / JCM 1002 / NBRC 13953 / NCIMB 11778 / NCTC 12712 / WDCM 00102 / Lb 14)).